The primary structure comprises 470 residues: MAKFFALKNFTALSDLHPNMANLKIIGIVIGKTDVKGFPDRKNIGSERYTFSFTIRDSPNHFVNVSSWGSEDYIRSLSDNFKVGECVIIENPLIQRKETEREERFSPATPSNYKLLLSENHSMVKVCSPYEVDTKLLSLIHLPVKESRDYYSLADIVANGHSLDGRIINVLAAVRSVGEPKYFTTSDRRKGQRCEVKLFDETEPSFTMTCWDNESILLAQSWMARETVIFASDVRINFNKFQNCMAATVISKTIITVNPDTPEANILLNFIRENKETSIADEIDSYLKESVNLNTIVNVYTVEQLKGKALENEGKVDPFYGILYAYISTLNIDDETTKVVRNRCSSCGYIVNDASNTCTICSKDSSRSRSFCLSFDVLVDLTDHTGTLRSCSLSGSVAEETLGCTINEFLTMTSEQKTKLKWQLLLERSKIYLKLILSHRARGGLKVTILSCKLADPIEASRDLAGQGHT.

A DNA-binding region (OB) is located at residues 167–272 (IINVLAAVRS…EANILLNFIR (106 aa)).

Belongs to the MEIOB family. In terms of assembly, component of a multiprotein complex with RPA2 and SPATA22. Interacts with SPATA22. Interacts with the complex BRME1:HSF2BP:BRCA2.

Its subcellular location is the cytoplasm. It localises to the nucleus. The protein localises to the chromosome. Its function is as follows. Single-stranded DNA-binding protein required for homologous recombination in meiosis I. Required for double strand breaks (DSBs) repair and crossover formation and promotion of faithful and complete synapsis. Not required for the initial loading of recombinases but required to maintain a proper number of RAD51 and DMC1 foci after the zygotene stage. May act by ensuring the stabilization of recombinases, which is required for successful homology search and meiotic recombination. Displays Single-stranded DNA 3'-5' exonuclease activity in vitro. The protein is Meiosis-specific with OB domain-containing protein of Rattus norvegicus (Rat).